The sequence spans 431 residues: Levansucrase Lscbeta (431 aa).

Trp-61, Asp-62, Ala-148, Arg-218, and Asp-219 together coordinate sucrose. Asp-62 (nucleophile) is an active-site residue. The Proton donor/acceptor role is filled by Glu-303.

Belongs to the glycosyl hydrolase 68 family. As to quaternary structure, homodimer.

It carries out the reaction [6)-beta-D-fructofuranosyl-(2-&gt;](n) alpha-D-glucopyranoside + sucrose = [6)-beta-D-fructofuranosyl-(2-&gt;](n+1) alpha-D-glucopyranoside + D-glucose. Its activity is regulated as follows. Sucrose hydrolase activity is negatively affected by salt concentration. The levan polymerization rate is constant regardless of sucrose concentration. Catalyzes the synthesis of levan, a fructose polymer, by transferring the fructosyl moiety from sucrose to a growing acceptor molecule. Also displays sucrose hydrolase activity. The polypeptide is Levansucrase Lscbeta (Pseudomonas syringae pv. actinidiae).